The primary structure comprises 634 residues: ATP-dependent zinc metalloprotease FtsH (634 aa).

Residues 1–5 (MNALK) are Cytoplasmic-facing. The chain crosses the membrane as a helical span at residues 6-26 (NFFIWAIIIGAAIVAFNLFEG). The Periplasmic segment spans residues 27–100 (KREFTTKVSL…VANPEPPGGW (74 aa)). The chain crosses the membrane as a helical span at residues 101–121 (LVNVFLSWLPILFFIGIWIFL). Residues 122 to 634 (LRQMSGGGNV…KSEEVKEEVV (513 aa)) are Cytoplasmic-facing. Residue 195 to 202 (GEPGVGKT) participates in ATP binding. Residue His-418 coordinates Zn(2+). Glu-419 is a catalytic residue. Residues His-422 and Asp-496 each contribute to the Zn(2+) site. Positions 615–634 (DRKSEENKELKSEEVKEEVV) are disordered.

It in the central section; belongs to the AAA ATPase family. In the C-terminal section; belongs to the peptidase M41 family. In terms of assembly, the isolated protease domain (residues 405-634) forms a stable hexamer. The cofactor is Zn(2+).

Its subcellular location is the cell inner membrane. Acts as a processive, ATP-dependent zinc metallopeptidase for both cytoplasmic and membrane proteins. Plays a role in the quality control of integral membrane proteins. This chain is ATP-dependent zinc metalloprotease FtsH, found in Aquifex aeolicus (strain VF5).